Here is a 548-residue protein sequence, read N- to C-terminus: Folylpolyglutamate synthase (548 aa).

130 to 133 (GKGS) serves as a coordination point for ATP. Mg(2+)-binding residues include Ser157, Glu234, and His262. ATP is bound by residues Arg382 and Asp396.

The protein belongs to the folylpolyglutamate synthase family. It depends on a monovalent cation as a cofactor.

The protein resides in the mitochondrion inner membrane. The protein localises to the mitochondrion matrix. It localises to the cytoplasm. It catalyses the reaction (6S)-5,6,7,8-tetrahydrofolyl-(gamma-L-Glu)(n) + L-glutamate + ATP = (6S)-5,6,7,8-tetrahydrofolyl-(gamma-L-Glu)(n+1) + ADP + phosphate + H(+). It functions in the pathway cofactor biosynthesis; tetrahydrofolylpolyglutamate biosynthesis. Its function is as follows. Catalyzes conversion of folates to polyglutamate derivatives allowing concentration of folate compounds in the cell and the intracellular retention of these cofactors, which are important substrates for most of the folate-dependent enzymes that are involved in one-carbon transfer reactions involved in purine, pyrimidine and amino acid synthesis. Required for methionine synthesis and maintenance of intact mitochondrial DNA. Involved in telomere maintenance. In Saccharomyces cerevisiae (strain FostersB) (Baker's yeast), this protein is Folylpolyglutamate synthase.